A 322-amino-acid chain; its full sequence is Phosphatidylglycerol--prolipoprotein diacylglyceryl transferase (322 aa).

4 helical membrane passes run 21 to 41 (PLPI…AIWL), 50 to 70 (GGNP…GIIG), 98 to 118 (NGGL…WAYF), and 123 to 143 (IPLA…QAIG). Position 144 (arginine 144) interacts with a 1,2-diacyl-sn-glycero-3-phospho-(1'-sn-glycerol). 2 helical membrane-spanning segments follow: residues 191 to 211 (VHPT…LLIW) and 254 to 274 (INTL…LRLG). The disordered stretch occupies residues 283 to 322 (VDPAYHAAQAERDDTETAGLDATTGTVPGDSPETTGKKRK).

Belongs to the Lgt family.

It localises to the cell membrane. It carries out the reaction L-cysteinyl-[prolipoprotein] + a 1,2-diacyl-sn-glycero-3-phospho-(1'-sn-glycerol) = an S-1,2-diacyl-sn-glyceryl-L-cysteinyl-[prolipoprotein] + sn-glycerol 1-phosphate + H(+). Its pathway is protein modification; lipoprotein biosynthesis (diacylglyceryl transfer). Catalyzes the transfer of the diacylglyceryl group from phosphatidylglycerol to the sulfhydryl group of the N-terminal cysteine of a prolipoprotein, the first step in the formation of mature lipoproteins. The sequence is that of Phosphatidylglycerol--prolipoprotein diacylglyceryl transferase from Corynebacterium efficiens (strain DSM 44549 / YS-314 / AJ 12310 / JCM 11189 / NBRC 100395).